We begin with the raw amino-acid sequence, 71 residues long: HWHLVYPIEAPDRSIVDKDRRGELFYYMHQQIIARYNAERYNAERLSNHMARVQPFNNLDEPIAEGYFPKM.

Residues histidine 3 and histidine 29 each contribute to the Cu cation site.

It belongs to the tyrosinase family. Cu(2+) is required as a cofactor. Upon activation, a trypsin type protease cleaves prophenol oxidase to yield the active enzyme. As to expression, hemocytes and plasma.

The protein localises to the secreted. It carries out the reaction 2 L-dopa + O2 = 2 L-dopaquinone + 2 H2O. The catalysed reaction is L-tyrosine + O2 = L-dopaquinone + H2O. This is a copper-containing oxidase that functions in the formation of pigments such as melanins and other polyphenolic compounds. Catalyzes the rate-limiting conversions of tyrosine to DOPA, DOPA to DOPA-quinone and possibly 5,6 dihydroxyindole to indole-5'6 quinone. This Sarcophaga argyrostoma (Flesh fly) protein is Phenoloxidase 3.